We begin with the raw amino-acid sequence, 231 residues long: Phosphatidylserine decarboxylase proenzyme (231 aa).

The Schiff-base intermediate with substrate; via pyruvic acid role is filled by Ser188. Residue Ser188 is modified to Pyruvic acid (Ser); by autocatalysis.

This sequence belongs to the phosphatidylserine decarboxylase family. PSD-A subfamily. As to quaternary structure, heterodimer of a large membrane-associated beta subunit and a small pyruvoyl-containing alpha subunit. It depends on pyruvate as a cofactor. In terms of processing, is synthesized initially as an inactive proenzyme. Formation of the active enzyme involves a self-maturation process in which the active site pyruvoyl group is generated from an internal serine residue via an autocatalytic post-translational modification. Two non-identical subunits are generated from the proenzyme in this reaction, and the pyruvate is formed at the N-terminus of the alpha chain, which is derived from the carboxyl end of the proenzyme. The post-translation cleavage follows an unusual pathway, termed non-hydrolytic serinolysis, in which the side chain hydroxyl group of the serine supplies its oxygen atom to form the C-terminus of the beta chain, while the remainder of the serine residue undergoes an oxidative deamination to produce ammonia and the pyruvoyl prosthetic group on the alpha chain.

It localises to the cell membrane. The catalysed reaction is a 1,2-diacyl-sn-glycero-3-phospho-L-serine + H(+) = a 1,2-diacyl-sn-glycero-3-phosphoethanolamine + CO2. Its pathway is phospholipid metabolism; phosphatidylethanolamine biosynthesis; phosphatidylethanolamine from CDP-diacylglycerol: step 2/2. In terms of biological role, catalyzes the formation of phosphatidylethanolamine (PtdEtn) from phosphatidylserine (PtdSer). The protein is Phosphatidylserine decarboxylase proenzyme of Rickettsia bellii (strain OSU 85-389).